Reading from the N-terminus, the 229-residue chain is Urease accessory protein UreF (229 aa).

Belongs to the UreF family. In terms of assembly, ureD, UreF and UreG form a complex that acts as a GTP-hydrolysis-dependent molecular chaperone, activating the urease apoprotein by helping to assemble the nickel containing metallocenter of UreC. The UreE protein probably delivers the nickel.

The protein resides in the cytoplasm. Its function is as follows. Required for maturation of urease via the functional incorporation of the urease nickel metallocenter. In Staphylococcus aureus (strain MRSA252), this protein is Urease accessory protein UreF.